An 803-amino-acid chain; its full sequence is PR domain zinc finger protein 4 (803 aa).

In terms of domain architecture, SET spans 408–532 (KQLVLRQSIV…PESELLFYYS (125 aa)). 5 C2H2-type zinc fingers span residues 593–615 (WKCS…FMGH), 621–643 (HKCD…LKIH), 649–671 (YRCT…MVIH), 677–699 (LKCD…VLIH), and 705–727 (IKCP…LNSH). The segment at 733 to 755 (YVCEKCTKAYLTKYHLTRHLKTC) adopts a C2H2-type 6; degenerate zinc-finger fold. A disordered region spans residues 757-803 (EPSSSSSAQEEEDDESEEEDLADSMRTEDCRMGSAVYSTDESLSAHK). A compositionally biased stretch (acidic residues) spans 765–778 (QEEEDDESEEEDLA). Over residues 792–803 (VYSTDESLSAHK) the composition is skewed to polar residues.

Belongs to the class V-like SAM-binding methyltransferase superfamily.

It is found in the nucleus. Its function is as follows. May function as a transcription factor involved in cell differentiation. This Mus musculus (Mouse) protein is PR domain zinc finger protein 4 (Prdm4).